We begin with the raw amino-acid sequence, 299 residues long: Coenzyme PQQ synthesis protein B (299 aa).

This sequence belongs to the PqqB family.

Its pathway is cofactor biosynthesis; pyrroloquinoline quinone biosynthesis. In terms of biological role, may be involved in the transport of PQQ or its precursor to the periplasm. This chain is Coenzyme PQQ synthesis protein B, found in Methylorubrum populi (strain ATCC BAA-705 / NCIMB 13946 / BJ001) (Methylobacterium populi).